The sequence spans 402 residues: NADH-quinone oxidoreductase subunit D (402 aa).

This sequence belongs to the complex I 49 kDa subunit family. As to quaternary structure, NDH-1 is composed of 14 different subunits. Subunits NuoB, C, D, E, F, and G constitute the peripheral sector of the complex.

The protein resides in the cell inner membrane. It catalyses the reaction a quinone + NADH + 5 H(+)(in) = a quinol + NAD(+) + 4 H(+)(out). In terms of biological role, NDH-1 shuttles electrons from NADH, via FMN and iron-sulfur (Fe-S) centers, to quinones in the respiratory chain. The immediate electron acceptor for the enzyme in this species is believed to be ubiquinone. Couples the redox reaction to proton translocation (for every two electrons transferred, four hydrogen ions are translocated across the cytoplasmic membrane), and thus conserves the redox energy in a proton gradient. The polypeptide is NADH-quinone oxidoreductase subunit D (Cereibacter sphaeroides (strain ATCC 17025 / ATH 2.4.3) (Rhodobacter sphaeroides)).